The sequence spans 130 residues: Small ribosomal subunit protein uS9 (130 aa).

Belongs to the universal ribosomal protein uS9 family.

The polypeptide is Small ribosomal subunit protein uS9 (Desulfovibrio desulfuricans (strain ATCC 27774 / DSM 6949 / MB)).